The chain runs to 105 residues: Large ribosomal subunit protein uL24 (105 aa).

This sequence belongs to the universal ribosomal protein uL24 family. In terms of assembly, part of the 50S ribosomal subunit.

In terms of biological role, one of two assembly initiator proteins, it binds directly to the 5'-end of the 23S rRNA, where it nucleates assembly of the 50S subunit. One of the proteins that surrounds the polypeptide exit tunnel on the outside of the subunit. The chain is Large ribosomal subunit protein uL24 from Methylobacterium sp. (strain 4-46).